A 417-amino-acid polypeptide reads, in one-letter code: Exodeoxyribonuclease 7 large subunit (417 aa).

The protein belongs to the XseA family. As to quaternary structure, heterooligomer composed of large and small subunits.

The protein resides in the cytoplasm. The enzyme catalyses Exonucleolytic cleavage in either 5'- to 3'- or 3'- to 5'-direction to yield nucleoside 5'-phosphates.. In terms of biological role, bidirectionally degrades single-stranded DNA into large acid-insoluble oligonucleotides, which are then degraded further into small acid-soluble oligonucleotides. The polypeptide is Exodeoxyribonuclease 7 large subunit (Corynebacterium glutamicum (strain ATCC 13032 / DSM 20300 / JCM 1318 / BCRC 11384 / CCUG 27702 / LMG 3730 / NBRC 12168 / NCIMB 10025 / NRRL B-2784 / 534)).